Reading from the N-terminus, the 562-residue chain is UPF0649 protein C1442.02 (562 aa).

Ser-285 and Ser-286 each carry phosphoserine. Residues 288–308 (DEEIAKNADVPAEVDNNSTKA) form a disordered region.

It belongs to the UPF0649 family.

It is found in the cytoplasm. It localises to the nucleus. The chain is UPF0649 protein C1442.02 from Schizosaccharomyces pombe (strain 972 / ATCC 24843) (Fission yeast).